A 206-amino-acid polypeptide reads, in one-letter code: Fibroblast growth factor 4 (206 aa).

The first 29 residues, 1–29 (MAGPGTAAAALLPAVLLAVLAPWAGRGGA), serve as a signal peptide directing secretion.

It belongs to the heparin-binding growth factors family. Interacts with FGFR1, FGFR2, FGFR3 and FGFR4. Affinity between fibroblast growth factors (FGFs) and their receptors is increased by heparan sulfate glycosaminoglycans that function as coreceptors.

The protein resides in the secreted. Plays an important role in the regulation of embryonic development, cell proliferation, and cell differentiation. Required for normal limb and cardiac valve development during embryogenesis. May play a role in embryonic molar tooth bud development via inducing the expression of MSX1, MSX2 and MSX1-mediated expression of SDC1 in dental mesenchyme cells. In Bos taurus (Bovine), this protein is Fibroblast growth factor 4.